The following is a 218-amino-acid chain: Kynurenine formamidase (218 aa).

Trp-27 contributes to the substrate binding site. Residues His-57, His-61, and Asp-63 each coordinate Zn(2+). His-67 (proton donor/acceptor) is an active-site residue. His-169 and Glu-181 together coordinate Zn(2+).

Belongs to the Cyclase 1 superfamily. KynB family. Homodimer. The cofactor is Zn(2+).

It catalyses the reaction N-formyl-L-kynurenine + H2O = L-kynurenine + formate + H(+). The protein operates within amino-acid degradation; L-tryptophan degradation via kynurenine pathway; L-kynurenine from L-tryptophan: step 2/2. Inhibited by EDTA. Insensitive to phenylmethylsulfonyl fluoride (PMSF). Its function is as follows. Catalyzes the hydrolysis of N-formyl-L-kynurenine to L-kynurenine, the second step in the kynurenine pathway of tryptophan degradation. This is Kynurenine formamidase from Cupriavidus metallidurans (strain ATCC 43123 / DSM 2839 / NBRC 102507 / CH34) (Ralstonia metallidurans).